Reading from the N-terminus, the 138-residue chain is Putative pre-16S rRNA nuclease (138 aa).

It belongs to the YqgF nuclease family.

The protein localises to the cytoplasm. Could be a nuclease involved in processing of the 5'-end of pre-16S rRNA. The polypeptide is Putative pre-16S rRNA nuclease (Escherichia fergusonii (strain ATCC 35469 / DSM 13698 / CCUG 18766 / IAM 14443 / JCM 21226 / LMG 7866 / NBRC 102419 / NCTC 12128 / CDC 0568-73)).